Reading from the N-terminus, the 364-residue chain is Cobalt-precorrin-5B C(1)-methyltransferase (364 aa).

The protein belongs to the CbiD family.

The catalysed reaction is Co-precorrin-5B + S-adenosyl-L-methionine = Co-precorrin-6A + S-adenosyl-L-homocysteine. It functions in the pathway cofactor biosynthesis; adenosylcobalamin biosynthesis; cob(II)yrinate a,c-diamide from sirohydrochlorin (anaerobic route): step 6/10. In terms of biological role, catalyzes the methylation of C-1 in cobalt-precorrin-5B to form cobalt-precorrin-6A. This chain is Cobalt-precorrin-5B C(1)-methyltransferase, found in Pseudomonas putida (strain GB-1).